A 406-amino-acid chain; its full sequence is Paracaspase (406 aa).

Residues 193 to 374 (IGNSKYSQHR…TERKNNNIST (182 aa)) form a caspase-like region. Residues histidine 266 and cysteine 311 contribute to the active site.

Belongs to the peptidase C14B family.

Functionally, not required for DIF-induced autophagic cell death and necrotic cell death. In Dictyostelium discoideum (Social amoeba), this protein is Paracaspase (pcp).